Here is a 394-residue protein sequence, read N- to C-terminus: MAKEAFDRSLPHVNIGTIGHVDHGKTTLTAAITKVLADKGGAEFKDYANIDNAPEERERGITINTSHVEYKTENRHYAHVDCPGHADYVKNMITGAAQMDGGILVVAATDGPMPQTREHILLSRQVGVPKIVVFLNKCDMVDDEEMIDLVEMEVRDLLSAYDFDGDGAPVIRGSALGALNGEAKWVAAIEELMAAVDEYIPTPTRDSDKTFLMPVEDVFTITGRGTVATGRVERGTIKVNEEVEIVGLVEEAKKTVVTGLEMFRKLLDFAEAGDNVGALLRGVDRESIERGQVLAKPGTIKPHTKLQASVYALTTEEGGRQKPFFNKYRPQFYFRTTDVTGEVILPAGTDMVMPGDNVEMTVELIKPIAVEDGTKFSIREGGRTIGAGTVISVQ.

The region spanning 10–204 (LPHVNIGTIG…AVDEYIPTPT (195 aa)) is the tr-type G domain. Residues 19-26 (GHVDHGKT) are G1. 19 to 26 (GHVDHGKT) contacts GTP. Residue Thr-26 coordinates Mg(2+). The interval 60-64 (GITIN) is G2. Residues 81 to 84 (DCPG) form a G3 region. GTP contacts are provided by residues 81–85 (DCPGH) and 136–139 (NKCD). Residues 136-139 (NKCD) form a G4 region. A G5 region spans residues 174–176 (SAL).

Belongs to the TRAFAC class translation factor GTPase superfamily. Classic translation factor GTPase family. EF-Tu/EF-1A subfamily. Monomer.

The protein resides in the cytoplasm. It carries out the reaction GTP + H2O = GDP + phosphate + H(+). Functionally, GTP hydrolase that promotes the GTP-dependent binding of aminoacyl-tRNA to the A-site of ribosomes during protein biosynthesis. This chain is Elongation factor Tu, found in Mesoplasma florum (strain ATCC 33453 / NBRC 100688 / NCTC 11704 / L1) (Acholeplasma florum).